Consider the following 158-residue polypeptide: C-type lectin lectoxin-Enh7 (158 aa).

A signal peptide spans 1–23 (MGQFTVVSLGLLAVFLSLSGAKG). Cystine bridges form between Cys-26–Cys-37, Cys-54–Cys-154, and Cys-129–Cys-146. Positions 33-155 (RNGVCNKLFP…CASLHPFICQ (123 aa)) constitute a C-type lectin domain. The Mannose-binding signature appears at 119 to 121 (EPN). Positions 127, 142, and 143 each coordinate Ca(2+).

It belongs to the true venom lectin family. As to expression, expressed by the venom gland.

The protein localises to the secreted. Mannose-binding lectin which recognizes specific carbohydrate structures and agglutinates a variety of animal cells by binding to cell-surface glycoproteins and glycolipids. May be a calcium-dependent lectin. In Pseudoferania polylepis (Macleay's water snake), this protein is C-type lectin lectoxin-Enh7.